A 146-amino-acid polypeptide reads, in one-letter code: UPF0756 membrane protein PTH_1817 (146 aa).

4 helical membrane passes run 6-26 (LLIG…ILLI), 46-66 (MGLT…KASW), 69-89 (IISS…ALAT), and 105-125 (IVFG…GIPV).

It belongs to the UPF0756 family.

The protein resides in the cell membrane. The protein is UPF0756 membrane protein PTH_1817 of Pelotomaculum thermopropionicum (strain DSM 13744 / JCM 10971 / SI).